A 125-amino-acid chain; its full sequence is 13 kDa ribonucleoprotein-associated protein (125 aa).

The protein belongs to the eukaryotic ribosomal protein eL8 family. As to quaternary structure, component of the U3 snoRNP particle. Binds to the C'/D and B/C motifs in U3 snoRNA. Component of the 25S U4/U6.U5 tri-snRNP particle, a subcomplex of the spliceosome. Binds to the 5' stem-loop of U4 snRNA.

It localises to the nucleus. It is found in the nucleolus. Its function is as follows. Common component of the spliceosome and rRNA processing machinery. In association with the spliceosomal U4/U6.U5 tri-snRNP particle, required for splicing of pre-mRNA. In association with box C/D snoRNPs, required for processing of pre-ribosomal RNA (rRNA) and site-specific 2'-O-methylation of substrate RNAs. Essential for the accumulation and stability of U4 snRNA, U6 snRNA, and box C/D snoRNAs. The sequence is that of 13 kDa ribonucleoprotein-associated protein (snu13) from Schizosaccharomyces pombe (strain 972 / ATCC 24843) (Fission yeast).